The primary structure comprises 242 residues: Zinc finger protein ZOP1 (242 aa).

The Matrin-type zinc finger occupies 11–42 (KWCEFCKIWIQNNPTSIRNHDLGKRHRECVDK). Positions 42-71 (KKLTDMRERSAAKDKELKKNEKLLQQIEAK) form a coiled coil. A disordered region spans residues 154–242 (VKKPVSSSGA…PLLGLYNRPF (89 aa)). Positions 155–172 (KKPVSSSGAGPSVGKPPG) are enriched in low complexity. Residues 201–233 (RQDEKPKKVSAEEKAALKAREAARKRVEDREKP) show a composition bias toward basic and acidic residues.

As to quaternary structure, component of a pre-mRNA splicing complex. Interacts with STA1. Interacts with PRP31.

It localises to the nucleus. Its subcellular location is the cajal body. In terms of biological role, nucleic acid-binding protein that promotes Pol IV-dependent small interfering RNA (siRNA) accumulation, DNA methylation and transcriptional silencing. May possess both RNA-directed DNA methylation (RdDM)-dependent and -independent roles in transcriptional silencing. Acts as a pre-mRNA splicing factor that associates with several typical components of the splicing machinery as well as with Pol II. The polypeptide is Zinc finger protein ZOP1 (Arabidopsis thaliana (Mouse-ear cress)).